Consider the following 160-residue polypeptide: Cytochrome c-type biogenesis protein CcmE (160 aa).

Over 1–7 (MTRKQRR) the chain is Cytoplasmic. The helical; Signal-anchor for type II membrane protein transmembrane segment at 8 to 28 (LFMIFGALGTLGVAVGLILFA) threads the bilayer. Over 29 to 160 (LSDNIVFFYG…TQGAAAPLIR (132 aa)) the chain is Periplasmic. Heme is bound by residues His122 and Tyr126. The interval 140–160 (VWQEDGQAKPATQGAAAPLIR) is disordered.

Belongs to the CcmE/CycJ family.

The protein resides in the cell inner membrane. Functionally, heme chaperone required for the biogenesis of c-type cytochromes. Transiently binds heme delivered by CcmC and transfers the heme to apo-cytochromes in a process facilitated by CcmF and CcmH. The polypeptide is Cytochrome c-type biogenesis protein CcmE (Beijerinckia indica subsp. indica (strain ATCC 9039 / DSM 1715 / NCIMB 8712)).